The chain runs to 406 residues: Serine/threonine transporter SstT (406 aa).

Transmembrane regions (helical) follow at residues 11–31 (IGLV…GWLM), 45–65 (FVGA…MAAI), 79–99 (VLIM…VASF), 141–161 (AIAN…GLAL), 185–205 (FVIA…IAET), 216–236 (LLTI…PIIV), 298–318 (MAGA…TLGV), 330–350 (VVAT…LLLI), and 357–377 (FNIP…IGVV).

This sequence belongs to the dicarboxylate/amino acid:cation symporter (DAACS) (TC 2.A.23) family.

The protein resides in the cell inner membrane. It catalyses the reaction L-serine(in) + Na(+)(in) = L-serine(out) + Na(+)(out). The enzyme catalyses L-threonine(in) + Na(+)(in) = L-threonine(out) + Na(+)(out). Functionally, involved in the import of serine and threonine into the cell, with the concomitant import of sodium (symport system). This chain is Serine/threonine transporter SstT, found in Psychrobacter sp. (strain PRwf-1).